The following is an 88-amino-acid chain: Small ribosomal subunit protein uS15 (88 aa).

Belongs to the universal ribosomal protein uS15 family. In terms of assembly, part of the 30S ribosomal subunit. Forms a bridge to the 50S subunit in the 70S ribosome, contacting the 23S rRNA.

In terms of biological role, one of the primary rRNA binding proteins, it binds directly to 16S rRNA where it helps nucleate assembly of the platform of the 30S subunit by binding and bridging several RNA helices of the 16S rRNA. Functionally, forms an intersubunit bridge (bridge B4) with the 23S rRNA of the 50S subunit in the ribosome. This is Small ribosomal subunit protein uS15 from Borreliella afzelii (strain PKo) (Borrelia afzelii).